Reading from the N-terminus, the 431-residue chain is Probable pectate lyase 1 (431 aa).

The first 20 residues, 1–20 (MAVLPTWLLAMMCLLFFVGA), serve as a signal peptide directing secretion. N-linked (GlcNAc...) asparagine glycosylation is found at asparagine 23, asparagine 28, and asparagine 65. The Ca(2+) site is built by aspartate 227, aspartate 251, and aspartate 255. Arginine 307 is a catalytic residue.

It belongs to the polysaccharide lyase 1 family. The cofactor is Ca(2+). Expressed in flowers, but not in leaves.

The catalysed reaction is Eliminative cleavage of (1-&gt;4)-alpha-D-galacturonan to give oligosaccharides with 4-deoxy-alpha-D-galact-4-enuronosyl groups at their non-reducing ends.. Its pathway is glycan metabolism; pectin degradation; 2-dehydro-3-deoxy-D-gluconate from pectin: step 2/5. The chain is Probable pectate lyase 1 from Arabidopsis thaliana (Mouse-ear cress).